Here is a 251-residue protein sequence, read N- to C-terminus: Myozenin-3 (251 aa).

The residue at position 31 (serine 31) is a Phosphoserine. The segment at 50-67 (LLFQKRQRRVQKFTFELA) is binding to ACTN2, PPP3CA and TCAP. Residues 67–110 (AASQRAMLAGSARRKVTGTAESGTVANANGPEGPNYRSELHIFP) are binding to FLNC. The tract at residues 79–102 (RRKVTGTAESGTVANANGPEGPNY) is disordered. The binding to ACTN2 stretch occupies residues 186–207 (PSPNDYRNFNKTPVPFGGPLVG).

This sequence belongs to the myozenin family. In terms of assembly, interacts with ACTN2, LDB3, FLNC, PPP3CA and TCAP. As to expression, expressed specifically in skeletal muscle. Not detected in heart.

The protein resides in the cytoplasm. The protein localises to the myofibril. It is found in the sarcomere. It localises to the z line. Its function is as follows. Myozenins may serve as intracellular binding proteins involved in linking Z line proteins such as alpha-actinin, gamma-filamin, TCAP/telethonin, LDB3/ZASP and localizing calcineurin signaling to the sarcomere. Plays an important role in the modulation of calcineurin signaling. May play a role in myofibrillogenesis. The polypeptide is Myozenin-3 (Homo sapiens (Human)).